Reading from the N-terminus, the 371-residue chain is Cytochrome b (371 aa).

Transmembrane regions (helical) follow at residues 25 to 45, 69 to 90, 105 to 125, and 170 to 190; these read FGSMLLTCLVLQVLTGFFLAV, WMMQNLHAIGASMFFICIYIHI, WMSGITLLITLMATALFGYVL, and FFALHFILPFAIISLSSLHII. Positions 75 and 89 each coordinate heme b. Heme b is bound by residues His174 and His188. Residue His193 participates in a ubiquinone binding. 4 helical membrane-spanning segments follow: residues 218–238, 280–300, 312–332, and 339–358; these read HKDLLLLTLMMMFLFIIVSFF, LGGALALVASIMILFTTPFTH, LSQLMFWTLVSTFITITWAAT, and FIAISQVTSMLYFTFFLSIP.

The protein belongs to the cytochrome b family. The cytochrome bc1 complex contains 3 respiratory subunits (MT-CYB, CYC1 and UQCRFS1), 2 core proteins (UQCRC1 and UQCRC2) and probably 6 low-molecular weight proteins. It depends on heme b as a cofactor.

The protein resides in the mitochondrion inner membrane. Functionally, component of the ubiquinol-cytochrome c reductase complex (complex III or cytochrome b-c1 complex) that is part of the mitochondrial respiratory chain. The b-c1 complex mediates electron transfer from ubiquinol to cytochrome c. Contributes to the generation of a proton gradient across the mitochondrial membrane that is then used for ATP synthesis. This chain is Cytochrome b (MT-CYB), found in Liasis olivaceus (Olive python).